A 251-amino-acid polypeptide reads, in one-letter code: Derlin-1 (251 aa).

Position 2 is an N-acetylserine (serine 2). Topologically, residues 2-15 are cytoplasmic; it reads SDIGDWFRSIPAIT. The chain crosses the membrane as a helical span at residues 16–31; the sequence is RYWFAATVAVPLVGKL. The Lumenal portion of the chain corresponds to 32 to 69; that stretch reads GLISPAYLFLWPEAFLYRFQIWRPITATFYFPVGPGTG. The chain crosses the membrane as a helical span at residues 70–89; that stretch reads FLYLVNLYFLYHYSTRLETG. The Cytoplasmic portion of the chain corresponds to 90–94; sequence AFDGR. The chain crosses the membrane as a helical span at residues 95–115; sequence PADYLFMLLFNWICIVITGLA. The Lumenal portion of the chain corresponds to 116–122; that stretch reads MDMQLLM. A helical membrane pass occupies residues 123–137; the sequence is IPLIMSVLYVWAQLN. Residues 138–154 are Cytoplasmic-facing; sequence RDMIVSFWFGTRFKACY. Residues 155–166 traverse the membrane as a helical segment; that stretch reads LPWVILGFNYII. Topologically, residues 167-170 are lumenal; that stretch reads GGSV. The helical transmembrane segment at 171 to 189 threads the bilayer; it reads INELIGNLVGHLYFFLMFR. The Cytoplasmic segment spans residues 190–251; the sequence is YPMDLGGRNF…WGQGFRLGDQ (62 aa). Serine 201 carries the post-translational modification Phosphoserine. At threonine 202 the chain carries Phosphothreonine. Serine 226 is subject to Phosphoserine. Residues 229 to 251 are disordered; the sequence is RAADQNGGGGRHNWGQGFRLGDQ. The SHP-box signature appears at 241–248; the sequence is NWGQGFRL.

Belongs to the derlin family. Homotetramer. The four subunits of the tetramer are arranged in a twofold symmetry. Forms homo- and heterooligomers with DERL2 and DERL3; binding to DERL3 is poorer than that between DERL2 and DERL3. Interacts (via SHP-box motif) with VCP. Interacts with AMFR, SELENOS, SEL1L, SELENOK and SYVN1, as well as with SEL1L-SYVN1 and VCP-SELENOS protein complexes; this interaction is weaker than that observed between DERL2 and these complexes. Interacts with NGLY1 and YOD1. Does not bind to EDEM1. Interacts with DNAJB9. Interacts with RNF103. Interacts with HM13. Interacts with XBP1 isoform 1 (via luminal/ectodomain domain); the interaction obviates the need for ectodomain shedding prior HM13/SPP-mediated XBP1 isoform 1 cleavage. Interacts with the signal recognition particle/SRP and the SRP receptor; in the process of endoplasmic reticulum stress-induced pre-emptive quality control. May interact with UBXN6. Interacts with ZFAND2B; probably through VCP. Interacts with CCDC47. Interacts with C18orf32. May interact with TRAM1. Forms a complex with SVIP and VCP/p97.

It is found in the endoplasmic reticulum membrane. Functional component of endoplasmic reticulum-associated degradation (ERAD) for misfolded lumenal proteins. Forms homotetramers which encircle a large channel traversing the endoplasmic reticulum (ER) membrane. This allows the retrotranslocation of misfolded proteins from the ER into the cytosol where they are ubiquitinated and degraded by the proteasome. The channel has a lateral gate within the membrane which provides direct access to membrane proteins with no need to reenter the ER lumen first. May mediate the interaction between VCP and the misfolded protein. Also involved in endoplasmic reticulum stress-induced pre-emptive quality control, a mechanism that selectively attenuates the translocation of newly synthesized proteins into the endoplasmic reticulum and reroutes them to the cytosol for proteasomal degradation. By controlling the steady-state expression of the IGF1R receptor, indirectly regulates the insulin-like growth factor receptor signaling pathway. The chain is Derlin-1 from Pongo abelii (Sumatran orangutan).